The following is a 302-amino-acid chain: Methionyl-tRNA formyltransferase (302 aa).

Residue 103 to 106 participates in (6S)-5,6,7,8-tetrahydrofolate binding; the sequence is SLLP.

Belongs to the Fmt family.

The catalysed reaction is L-methionyl-tRNA(fMet) + (6R)-10-formyltetrahydrofolate = N-formyl-L-methionyl-tRNA(fMet) + (6S)-5,6,7,8-tetrahydrofolate + H(+). Its function is as follows. Attaches a formyl group to the free amino group of methionyl-tRNA(fMet). The formyl group appears to play a dual role in the initiator identity of N-formylmethionyl-tRNA by promoting its recognition by IF2 and preventing the misappropriation of this tRNA by the elongation apparatus. This Pseudothermotoga lettingae (strain ATCC BAA-301 / DSM 14385 / NBRC 107922 / TMO) (Thermotoga lettingae) protein is Methionyl-tRNA formyltransferase.